Consider the following 180-residue polypeptide: Protein sll1483 (180 aa).

The N-terminal stretch at 1-26 (MKTAARIVAFTALTGFALGMPTVAMA) is a signal peptide. Positions 45–176 (AMTIVEVAAG…GVIHVIDQVI (132 aa)) constitute an FAS1 domain.

The sequence is that of Protein sll1483 from Synechocystis sp. (strain ATCC 27184 / PCC 6803 / Kazusa).